A 20-amino-acid polypeptide reads, in one-letter code: Elongation factor Tu (20 aa).

This sequence belongs to the GTP-binding elongation factor family. EF-Tu/EF-1A subfamily. As to quaternary structure, monomer.

It localises to the cytoplasm. Functionally, this protein promotes the GTP-dependent binding of aminoacyl-tRNA to the A-site of ribosomes during protein biosynthesis. This is Elongation factor Tu (tuf) from Mycoplasmopsis synoviae (Mycoplasma synoviae).